A 119-amino-acid chain; its full sequence is Large ribosomal subunit protein bL20 (119 aa).

This sequence belongs to the bacterial ribosomal protein bL20 family.

Functionally, binds directly to 23S ribosomal RNA and is necessary for the in vitro assembly process of the 50S ribosomal subunit. It is not involved in the protein synthesizing functions of that subunit. The chain is Large ribosomal subunit protein bL20 from Brevibacillus brevis (strain 47 / JCM 6285 / NBRC 100599).